The primary structure comprises 116 residues: Large ribosomal subunit protein bL17 (116 aa).

The protein belongs to the bacterial ribosomal protein bL17 family. Part of the 50S ribosomal subunit. Contacts protein L32.

The protein is Large ribosomal subunit protein bL17 of Aliarcobacter butzleri (strain RM4018) (Arcobacter butzleri).